The following is a 131-amino-acid chain: MVTLYTSPSCTSCRKARAWLEEHDIPYKERNIFSEPLSLDEIKEILRMTEDGTDEIISTRSKTFQKLNVDLDSLPLQQLFELIQKNPGLLRRPIIIDEKRLQVGYNEDEIRRFLPRRVRTYQLREAQKMVN.

Cysteines 10 and 13 form a disulfide.

Belongs to the ArsC family. Spx subfamily. In terms of assembly, interacts with the C-terminal domain of the alpha subunit of the RNAP.

The protein localises to the cytoplasm. In terms of biological role, global transcriptional regulator that plays a key role in stress response and exerts either positive or negative regulation of genes. Acts by interacting with the C-terminal domain of the alpha subunit of the RNA polymerase (RNAP). This interaction can enhance binding of RNAP to the promoter region of target genes and stimulate their transcription, or block interaction of RNAP with activator. This Listeria innocua serovar 6a (strain ATCC BAA-680 / CLIP 11262) protein is Global transcriptional regulator Spx.